The primary structure comprises 605 residues: Elongation factor 4 (605 aa).

The tr-type G domain occupies 9-192; sequence GMIRNFCIIA…AIVQRIPAPA (184 aa). Residues 21–26 and 139–142 each bind GTP; these read DHGKST and NKID.

It belongs to the TRAFAC class translation factor GTPase superfamily. Classic translation factor GTPase family. LepA subfamily.

Its subcellular location is the cell inner membrane. It catalyses the reaction GTP + H2O = GDP + phosphate + H(+). Functionally, required for accurate and efficient protein synthesis under certain stress conditions. May act as a fidelity factor of the translation reaction, by catalyzing a one-codon backward translocation of tRNAs on improperly translocated ribosomes. Back-translocation proceeds from a post-translocation (POST) complex to a pre-translocation (PRE) complex, thus giving elongation factor G a second chance to translocate the tRNAs correctly. Binds to ribosomes in a GTP-dependent manner. The protein is Elongation factor 4 of Chlorobaculum parvum (strain DSM 263 / NCIMB 8327) (Chlorobium vibrioforme subsp. thiosulfatophilum).